A 547-amino-acid chain; its full sequence is 2-succinyl-5-enolpyruvyl-6-hydroxy-3-cyclohexene-1-carboxylate synthase (547 aa).

Belongs to the TPP enzyme family. MenD subfamily. In terms of assembly, homodimer. Mg(2+) serves as cofactor. Mn(2+) is required as a cofactor. It depends on thiamine diphosphate as a cofactor.

The catalysed reaction is isochorismate + 2-oxoglutarate + H(+) = 5-enolpyruvoyl-6-hydroxy-2-succinyl-cyclohex-3-ene-1-carboxylate + CO2. It participates in quinol/quinone metabolism; 1,4-dihydroxy-2-naphthoate biosynthesis; 1,4-dihydroxy-2-naphthoate from chorismate: step 2/7. Its pathway is quinol/quinone metabolism; menaquinone biosynthesis. Its function is as follows. Catalyzes the thiamine diphosphate-dependent decarboxylation of 2-oxoglutarate and the subsequent addition of the resulting succinic semialdehyde-thiamine pyrophosphate anion to isochorismate to yield 2-succinyl-5-enolpyruvyl-6-hydroxy-3-cyclohexene-1-carboxylate (SEPHCHC). This is 2-succinyl-5-enolpyruvyl-6-hydroxy-3-cyclohexene-1-carboxylate synthase from Mycobacterium sp. (strain KMS).